Consider the following 357-residue polypeptide: MADAATIAKLEEGFKKLEAATDCKSLLKKYLTKSVFDQLKDKKTSLGATLLDVIQSGVENLDSGVGVYAPDAEAYTLFAPLFDPIIEDYHKGFKQTDKHPNKDFGDVNQFVNVDPDGKFVISTRVRCGRSMEGYPFNPCLTEAQYKEMESKVSSTLSNLEGELKGTYFPLTGMTKEVQQKLIDDHFLFKEGDRFLQAANACRYWPTGRGIYHNDNKTFLVWCNEEDHLRIISMQMGGDLGQVYRRLVSAVNEIEKRVPFSHHDRLGFLTFCPTNLGTTVRASVHIKLPKLAANREKLEEVAGKYSLQVRGTRGEHTEAEGGVYDISNKRRMGLTEYQAVKEMQDGILELIKIEKEMQ.

Ala2 carries the N-acetylalanine modification. The region spanning 9–91 is the Phosphagen kinase N-terminal domain; it reads KLEEGFKKLE…FDPIIEDYHK (83 aa). 64-68 is an L-arginine binding site; sequence GVGVY. Positions 119-356 constitute a Phosphagen kinase C-terminal domain; the sequence is FVISTRVRCG…LELIKIEKEM (238 aa). ATP contacts are provided by residues 122–126 and His185; that span reads STRVR. Glu225 contributes to the L-arginine binding site. Arg229 contacts ATP. Residue Cys271 coordinates L-arginine. Residues 280–284 and 309–314 contribute to the ATP site; these read RASVH and RGTRGE. Glu314 is an L-arginine binding site.

The protein belongs to the ATP:guanido phosphotransferase family.

The catalysed reaction is L-arginine + ATP = N(omega)-phospho-L-arginine + ADP + H(+). This is Arginine kinase from Callinectes sapidus (Blue crab).